An 837-amino-acid chain; its full sequence is Striatin-interacting protein 1 (837 aa).

Methionine 1 is subject to N-acetylmethionine. Disordered regions lie at residues 1 to 67 (MEPA…ESPD) and 333 to 423 (AASP…KGLP). Over residues 18–35 (PQPPPPPPPATAQPPPGA) the composition is skewed to pro residues. A compositionally biased stretch (low complexity) spans 36-46 (PRAAAGLLPGG). Basic and acidic residues predominate over residues 47–60 (KAREFNRNQRKDSE). Serine 59, serine 335, and serine 339 each carry phosphoserine. Low complexity predominate over residues 333-343 (AASPPASASDS). A compositionally biased stretch (basic and acidic residues) spans 356-377 (KALIKQDNLDAFNERDPYKADD). Residues 378–391 (SREEEEENDDDNSL) show a composition bias toward acidic residues. Phosphoserine is present on serine 788. The interval 796-837 (DNCLQSVLGQRVDLPEDFQMNYDLWLEREVFSKPISWEELLQ) is required for STRIPAK core complex formation.

It belongs to the STRIP family. As to quaternary structure, part of the core of STRIPAK complexes composed of PP2A catalytic and scaffolding subunits, the striatins (PP2A regulatory subunits), the striatin-associated proteins MOB4, STRIP1 and STRIP2, PDCD10 and members of the STE20 kinases, such as STK24 and STK26. The STRIPAK complex can be extended by adapter proteins such as SLMAP:SIKE1, CTTNBP2 or CTTNBP2NL. Interacts with CDC42BPB. Interacts with CTTNBP2NL.

It localises to the cytoplasm. Plays a role in the regulation of cell morphology and cytoskeletal organization. Required in the cortical actin filament dynamics and cell shape. Part of the striatin-interacting phosphatase and kinase (STRIPAK) complexes. STRIPAK complexes have critical roles in protein (de)phosphorylation and are regulators of multiple signaling pathways including Hippo, MAPK, nuclear receptor and cytoskeleton remodeling. Different types of STRIPAK complexes are involved in a variety of biological processes such as cell growth, differentiation, apoptosis, metabolism and immune regulation. The sequence is that of Striatin-interacting protein 1 (STRIP1) from Pongo abelii (Sumatran orangutan).